The following is a 708-amino-acid chain: Lactotransferrin (708 aa).

An N-terminal signal peptide occupies residues 1-19 (MKLFVPALLSLGALGLCLA). 2 consecutive Transferrin-like domains span residues 25-352 (VRWC…NLRE) and 364-693 (VVWC…NLKK). Intrachain disulfides connect cysteine 28-cysteine 64 and cysteine 38-cysteine 55. Fe(3+) is bound at residue aspartate 79. Residue lysine 92 is part of the active site. Tyrosine 111 contacts Fe(3+). 5 disulfide bridges follow: cysteine 134–cysteine 217, cysteine 176–cysteine 192, cysteine 179–cysteine 202, cysteine 189–cysteine 200, and cysteine 250–cysteine 264. Residues arginine 140, alanine 142, and glycine 143 each coordinate hydrogencarbonate. Tyrosine 211 provides a ligand contact to Fe(3+). Asparagine 252 carries an N-linked (GlcNAc...) (high mannose) asparagine glycan. Residue histidine 272 participates in Fe(3+) binding. Serine 278 serves as the catalytic Nucleophile. The N-linked (GlcNAc...) asparagine glycan is linked to asparagine 300. 2 disulfides stabilise this stretch: cysteine 367/cysteine 399 and cysteine 377/cysteine 390. Residue asparagine 387 is glycosylated (N-linked (GlcNAc...) (complex) asparagine; alternate). A glycan (N-linked (GlcNAc...) (high mannose) asparagine; alternate) is linked at asparagine 387. Asparagine 387 carries N-linked (GlcNAc...) (hybrid) asparagine; alternate glycosylation. Fe(3+) is bound by residues aspartate 414 and tyrosine 452. 8 cysteine pairs are disulfide-bonded: cysteine 424–cysteine 703, cysteine 444–cysteine 666, cysteine 476–cysteine 551, cysteine 500–cysteine 694, cysteine 510–cysteine 524, cysteine 521–cysteine 534, cysteine 592–cysteine 606, and cysteine 644–cysteine 649. The hydrogencarbonate site is built by threonine 478, arginine 482, alanine 484, and glycine 485. Residue asparagine 495 is glycosylated (N-linked (GlcNAc...) (complex) asparagine; alternate). An N-linked (GlcNAc...) (high mannose) asparagine; alternate glycan is attached at asparagine 495. A glycan (N-linked (GlcNAc...) (hybrid) asparagine; alternate) is linked at asparagine 495. Residue tyrosine 545 participates in Fe(3+) binding. N-linked (GlcNAc...) (high mannose) asparagine glycosylation occurs at asparagine 564. Histidine 614 is a Fe(3+) binding site.

This sequence belongs to the transferrin family. Monomer. Found in a complex with LTF, CLU, EPPIN and SEMG1. Found in a complex with MPO and LTF; interacts directly with CP, allows Fe(3+) incorporation into LTF and activation of CP ferroxidase activity. Poly-N-acetyllactosaminic carbohydrate moiety seems to be needed for TLR4 activation.

It is found in the secreted. The protein resides in the cytoplasmic granule. In terms of biological role, transferrins are iron binding transport proteins which can bind two Fe(3+) ions in association with the binding of an anion, usually bicarbonate. Its function is as follows. Major iron-binding and multifunctional protein found in exocrine fluids such as breast milk and mucosal secretions. Has antimicrobial activity, which depends on the extracellular cation concentration. Antimicrobial properties include bacteriostasis, which is related to its ability to sequester free iron and thus inhibit microbial growth, as well as direct bactericidal properties leading to the release of lipopolysaccharides from the bacterial outer membrane. Can also prevent bacterial biofilm development in P.aeruginosa infection. Has weak antifungal activity against C.albicans. Has anabolic, differentiating and anti-apoptotic effects on osteoblasts and can also inhibit osteoclastogenesis, possibly playing a role in the regulation of bone growth. Promotes binding of species C adenoviruses to epithelial cells, promoting adenovirus infection. Can inhibit papillomavirus infections. Stimulates the TLR4 signaling pathway leading to NF-kappa-B activation and subsequent pro-inflammatory cytokine production while also interfering with the lipopolysaccharide (LPS)-stimulated TLR4 signaling. Inhibits neutrophil granulocyte migration to sites of apoptosis, when secreted by apoptotic cells. Stimulates VEGFA-mediated endothelial cell migration and proliferation. Binds heparin, chondroitin sulfate and possibly other glycosaminoglycans (GAGs). Also binds specifically to pneumococcal surface protein A (PspA), the lipid A portion of bacterial lipopolysaccharide (LPS), lysozyme and DNA. Functionally, lactoferricin binds to the bacterial surface and is crucial for the bactericidal functions. Has some antiviral activity against papillomavirus infection. N-terminal region shows strong antifungal activity against C.albicans. Contains two BBXB heparin-binding consensus sequences that appear to form the predominate functional GAG-binding site. The lactotransferrin transferrin-like domain 1 functions as a serine protease of the peptidase S60 family that cuts arginine rich regions. This function contributes to the antimicrobial activity. Shows a preferential cleavage at -Arg-Ser-Arg-Arg-|- and -Arg-Arg-Ser-Arg-|-, and of Z-Phe-Arg-|-aminomethylcoumarin sites. The polypeptide is Lactotransferrin (LTF) (Capra hircus (Goat)).